The primary structure comprises 67 residues: Phycobilisome 7.8 kDa linker polypeptide, allophycocyanin-associated, core (67 aa).

Residues 1–56 (MRMFRITACLPSPSKIRTQRELQNTFFTKLVPYDAWFREQQRIQKLGGKIIKVELA) enclose the CpcD-like domain.

This sequence belongs to the phycobilisome linker protein family.

It is found in the cellular thylakoid membrane. Its function is as follows. Rod linker protein, associated with allophycocyanin. Linker polypeptides determine the state of aggregation and the location of the disk-shaped phycobiliprotein units within the phycobilisome and modulate their spectroscopic properties in order to mediate a directed and optimal energy transfer. This chain is Phycobilisome 7.8 kDa linker polypeptide, allophycocyanin-associated, core (apcC), found in Synechococcus sp. (strain ATCC 27144 / PCC 6301 / SAUG 1402/1) (Anacystis nidulans).